Reading from the N-terminus, the 216-residue chain is 3-keto-L-gulonate-6-phosphate decarboxylase UlaD (216 aa).

Residue Asp11 participates in substrate binding. Mg(2+) contacts are provided by Glu33 and Asp62. Arg192 is a binding site for substrate.

The protein belongs to the HPS/KGPDC family. KGPDC subfamily. Homodimer. The cofactor is Mg(2+).

It catalyses the reaction 3-dehydro-L-gulonate 6-phosphate + H(+) = L-xylulose 5-phosphate + CO2. Its pathway is cofactor degradation; L-ascorbate degradation; D-xylulose 5-phosphate from L-ascorbate: step 2/4. Functionally, catalyzes the decarboxylation of 3-keto-L-gulonate-6-P into L-xylulose-5-P. Is involved in the anaerobic L-ascorbate utilization. This is 3-keto-L-gulonate-6-phosphate decarboxylase UlaD from Escherichia coli O17:K52:H18 (strain UMN026 / ExPEC).